The sequence spans 128 residues: Small ribosomal subunit protein bS6 (128 aa).

The interval 105–128 (AKVTEEEPVEAAPEAKVETTTEEE) is disordered. Residues 117–128 (PEAKVETTTEEE) show a composition bias toward basic and acidic residues.

It belongs to the bacterial ribosomal protein bS6 family.

Binds together with bS18 to 16S ribosomal RNA. This chain is Small ribosomal subunit protein bS6, found in Geotalea daltonii (strain DSM 22248 / JCM 15807 / FRC-32) (Geobacter daltonii).